The sequence spans 208 residues: Uracil phosphoribosyltransferase (208 aa).

Residues R78, R103, and 130–138 each bind 5-phospho-alpha-D-ribose 1-diphosphate; that span reads DPMLATGGS. Residues I193 and 198 to 200 each bind uracil; that span reads GDA. Position 199 (D199) interacts with 5-phospho-alpha-D-ribose 1-diphosphate.

This sequence belongs to the UPRTase family. It depends on Mg(2+) as a cofactor.

The enzyme catalyses UMP + diphosphate = 5-phospho-alpha-D-ribose 1-diphosphate + uracil. The protein operates within pyrimidine metabolism; UMP biosynthesis via salvage pathway; UMP from uracil: step 1/1. With respect to regulation, allosterically activated by GTP. Functionally, catalyzes the conversion of uracil and 5-phospho-alpha-D-ribose 1-diphosphate (PRPP) to UMP and diphosphate. The protein is Uracil phosphoribosyltransferase of Pectobacterium atrosepticum (strain SCRI 1043 / ATCC BAA-672) (Erwinia carotovora subsp. atroseptica).